The sequence spans 264 residues: Glutamate racemase (264 aa).

Substrate is bound by residues 10–11 (DS) and 42–43 (YG). Cys-73 (proton donor/acceptor) is an active-site residue. 74-75 (NT) serves as a coordination point for substrate. The active-site Proton donor/acceptor is the Cys-183. Position 184 to 185 (184 to 185 (TH)) interacts with substrate.

This sequence belongs to the aspartate/glutamate racemases family.

It carries out the reaction L-glutamate = D-glutamate. It functions in the pathway cell wall biogenesis; peptidoglycan biosynthesis. Functionally, provides the (R)-glutamate required for cell wall biosynthesis. The protein is Glutamate racemase of Streptococcus pyogenes serotype M18 (strain MGAS8232).